Here is a 166-residue protein sequence, read N- to C-terminus: uncharacterized protein (166 aa).

This is an uncharacterized protein from Schizosaccharomyces pombe (strain 972 / ATCC 24843) (Fission yeast).